A 212-amino-acid chain; its full sequence is Proteasome subunit beta 2 (212 aa).

Positions 1-15 (MLHHPGTGQLRALKG) are cleaved as a propeptide — removed in mature form; by autocatalysis. Catalysis depends on Thr16, which acts as the Nucleophile.

This sequence belongs to the peptidase T1B family. The 20S proteasome core is composed of 14 alpha and 14 beta subunits that assemble into four stacked heptameric rings, resulting in a barrel-shaped structure. The two inner rings, each composed of seven catalytic beta subunits, are sandwiched by two outer rings, each composed of seven alpha subunits. The catalytic chamber with the active sites is on the inside of the barrel. Has a gated structure, the ends of the cylinder being occluded by the N-termini of the alpha-subunits. Is capped at one or both ends by the proteasome regulatory ATPase, PAN.

Its subcellular location is the cytoplasm. It catalyses the reaction Cleavage of peptide bonds with very broad specificity.. The formation of the proteasomal ATPase PAN-20S proteasome complex, via the docking of the C-termini of PAN into the intersubunit pockets in the alpha-rings, triggers opening of the gate for substrate entry. Interconversion between the open-gate and close-gate conformations leads to a dynamic regulation of the 20S proteasome proteolysis activity. Functionally, component of the proteasome core, a large protease complex with broad specificity involved in protein degradation. This is Proteasome subunit beta 2 from Hyperthermus butylicus (strain DSM 5456 / JCM 9403 / PLM1-5).